The primary structure comprises 153 residues: Ubiquitin-conjugating enzyme E2 35 (153 aa).

One can recognise a UBC core domain in the interval 5–151 (NLPRRIIKET…AKEWTRLYAS (147 aa)). Residue cysteine 89 is the Glycyl thioester intermediate of the active site.

Belongs to the ubiquitin-conjugating enzyme family. As to quaternary structure, interacts with yeast and human Mms2, with the RING domain of RGLG2 and with UEV1A, UEV1B, UEV1C and UEV1D. As to expression, ubiquitously expressed at low level. Mainly expressed in the vasculature.

It catalyses the reaction S-ubiquitinyl-[E1 ubiquitin-activating enzyme]-L-cysteine + [E2 ubiquitin-conjugating enzyme]-L-cysteine = [E1 ubiquitin-activating enzyme]-L-cysteine + S-ubiquitinyl-[E2 ubiquitin-conjugating enzyme]-L-cysteine.. The protein operates within protein modification; protein ubiquitination. Catalyzes the synthesis of non-canonical poly-ubiquitin chains that are linked through 'Lys-63'. This type of poly-ubiquitination does not lead to protein degradation by the proteasome. Mediates transcriptional activation of target genes. Required for postreplication repair of UV-damaged DNA and for adapting root developmental programs to suboptimal availability of iron. The chain is Ubiquitin-conjugating enzyme E2 35 (UBC35) from Arabidopsis thaliana (Mouse-ear cress).